The sequence spans 827 residues: Periplasmic nitrate reductase (827 aa).

Positions 1–32 (MNLSRRDFMKANAALAAASVAGLIIPVKNVNA) form a signal peptide, tat-type signal. Residues 37–93 (ITWDKAVCRFCGTGCAVLVGTKDGRVVASQGDPDAEVNRGLNCIKGYFLPKIMYGKD) enclose the 4Fe-4S Mo/W bis-MGD-type domain. Positions 44, 47, 51, and 79 each coordinate [4Fe-4S] cluster. Residues K81, Q148, N173, C177, 210-217 (WGSNMAEM), 242-246 (STFEH), 261-263 (QSD), M372, Q376, N482, 508-509 (SD), K531, D558, and 717-726 (TGRILEHWHT) contribute to the Mo-bis(molybdopterin guanine dinucleotide) site. F793 contacts substrate. Residues N801 and K818 each contribute to the Mo-bis(molybdopterin guanine dinucleotide) site.

Belongs to the prokaryotic molybdopterin-containing oxidoreductase family. NasA/NapA/NarB subfamily. In terms of assembly, component of the periplasmic nitrate reductase NapAB complex composed of NapA and NapB. Requires [4Fe-4S] cluster as cofactor. The cofactor is Mo-bis(molybdopterin guanine dinucleotide). In terms of processing, predicted to be exported by the Tat system. The position of the signal peptide cleavage has not been experimentally proven.

It localises to the periplasm. It carries out the reaction 2 Fe(II)-[cytochrome] + nitrate + 2 H(+) = 2 Fe(III)-[cytochrome] + nitrite + H2O. Catalytic subunit of the periplasmic nitrate reductase complex NapAB. Receives electrons from NapB and catalyzes the reduction of nitrate to nitrite. The polypeptide is Periplasmic nitrate reductase (Histophilus somni (strain 129Pt) (Haemophilus somnus)).